Here is a 92-residue protein sequence, read N- to C-terminus: MKFEAVVRTELGKGASRRLRHAGKFPAVVYGGEEAAVAIVLNHDDIVNQMDKPEFYEGIVLVIDGKEVKVKPQDVQRHAFKPKVEHMDFIRI.

The protein belongs to the bacterial ribosomal protein bL25 family. As to quaternary structure, part of the 50S ribosomal subunit; part of the 5S rRNA/L5/L18/L25 subcomplex. Contacts the 5S rRNA. Binds to the 5S rRNA independently of L5 and L18.

In terms of biological role, this is one of the proteins that binds to the 5S RNA in the ribosome where it forms part of the central protuberance. In Vibrio parahaemolyticus serotype O3:K6 (strain RIMD 2210633), this protein is Large ribosomal subunit protein bL25.